Here is a 74-residue protein sequence, read N- to C-terminus: Translation initiation factor IF-1 (74 aa).

The S1-like domain occupies methionine 1–arginine 72.

This sequence belongs to the IF-1 family. Component of the 30S ribosomal translation pre-initiation complex which assembles on the 30S ribosome in the order IF-2 and IF-3, IF-1 and N-formylmethionyl-tRNA(fMet); mRNA recruitment can occur at any time during PIC assembly.

It is found in the cytoplasm. One of the essential components for the initiation of protein synthesis. Stabilizes the binding of IF-2 and IF-3 on the 30S subunit to which N-formylmethionyl-tRNA(fMet) subsequently binds. Helps modulate mRNA selection, yielding the 30S pre-initiation complex (PIC). Upon addition of the 50S ribosomal subunit IF-1, IF-2 and IF-3 are released leaving the mature 70S translation initiation complex. The sequence is that of Translation initiation factor IF-1 from Ureaplasma parvum serovar 3 (strain ATCC 700970).